The following is a 970-amino-acid chain: Disks large 1 tumor suppressor protein (970 aa).

Residues 4–64 (KKQEAHRALE…FYELTLLDDS (61 aa)) form the L27 domain. The disordered stretch occupies residues 161–209 (TENAKEPTVEQQQKQQQAQQRSSRSPQQQNPQQQQGSKSRSGSQTVNGD). Residues 171-204 (QQQKQQQAQQRSSRSPQQQNPQQQQGSKSRSGSQ) are compositionally biased toward low complexity. PDZ domains lie at 216–303 (DIQL…KRKR) and 330–421 (EIDL…GKTQ). The disordered stretch occupies residues 424–477 (TTSASGGGGGGLSSGQQLSQSQSQLATSQSQSQVHQQQHATPMVNSQSTEPGSR). Over residues 437-462 (SGQQLSQSQSQLATSQSQSQVHQQQH) the composition is skewed to low complexity. The span at 466 to 477 (MVNSQSTEPGSR) shows a compositional bias: polar residues. Position 496 is a phosphoserine (Ser-496). In terms of domain architecture, PDZ 3 spans 506–587 (TITIQKGPQG…VVTLLAQYRP (82 aa)). The region spanning 620 to 690 (KRSLYVRALF…PSKRRWERKM (71 aa)) is the SH3 domain. Residue Thr-714 is modified to Phosphothreonine. One can recognise a Guanylate kinase-like domain in the interval 780–955 (TRPVIILGPL…IYSKVKSMIW (176 aa)).

It belongs to the MAGUK family. As to expression, during the cellular blastoderm stage, isoform B, isoform F, isoform H, isoform I and isoform L expression is localized to the cell borders. From stage 11 onwards, expression is found predominantly in the developing nervous system: axon bundles in the ventral cord and the brain. Stage 14 and 15 embryos exhibit expression in the developing body wall muscle. Expression in neuropil regions of the CNS and at NMJs persists through to larval development. Other isoforms show expression in embryonic epithelial cells. In larvae, expression is seen as a belt around salivary glands, imaginal disks and proventriculus. Expressed in adult reproductive tissues. In epithelia, coexpressed with scrib throughout development.

The protein localises to the cytoplasm. It is found in the cell membrane. The protein resides in the basolateral cell membrane. It localises to the cytoskeleton. Its subcellular location is the cell junction. The protein localises to the septate junction. Functionally, during embryonic development, some isoforms are essential for proper neuronal differentiation and organization. Required for cell polarity; maintenance of apicobasal polarity. Plays a critical role at septate junctions in cellular growth control during larval development. The presence of a guanylate kinase domain suggests involvement in cellular adhesion as well as signal transduction to control cellular proliferation. The sequence is that of Disks large 1 tumor suppressor protein (dlg1) from Drosophila melanogaster (Fruit fly).